The following is a 379-amino-acid chain: Cytochrome b (379 aa).

A run of 4 helical transmembrane segments spans residues 34 to 54 (FGSL…LLAT), 78 to 99 (WLIR…YLHI), 114 to 134 (WNIG…GYVL), and 179 to 199 (FFAL…IHLT). Residues His84 and His98 each coordinate heme b. Residues His183 and His197 each contribute to the heme b site. A ubiquinone is bound at residue His202. 4 helical membrane-spanning segments follow: residues 227 to 247 (TKDM…AFFF), 289 to 309 (LGGV…PLLH), 321 to 341 (MSQL…WIGS), and 348 to 368 (FIII…FLFP).

This sequence belongs to the cytochrome b family. In terms of assembly, the cytochrome bc1 complex contains 11 subunits: 3 respiratory subunits (MT-CYB, CYC1 and UQCRFS1), 2 core proteins (UQCRC1 and UQCRC2) and 6 low-molecular weight proteins (UQCRH/QCR6, UQCRB/QCR7, UQCRQ/QCR8, UQCR10/QCR9, UQCR11/QCR10 and a cleavage product of UQCRFS1). This cytochrome bc1 complex then forms a dimer. Heme b is required as a cofactor.

The protein localises to the mitochondrion inner membrane. Functionally, component of the ubiquinol-cytochrome c reductase complex (complex III or cytochrome b-c1 complex) that is part of the mitochondrial respiratory chain. The b-c1 complex mediates electron transfer from ubiquinol to cytochrome c. Contributes to the generation of a proton gradient across the mitochondrial membrane that is then used for ATP synthesis. The polypeptide is Cytochrome b (MT-CYB) (Tinamus major (Great tinamou)).